The sequence spans 252 residues: Trans-aconitate 2-methyltransferase (252 aa).

This sequence belongs to the methyltransferase superfamily. Tam family.

The protein localises to the cytoplasm. The catalysed reaction is trans-aconitate + S-adenosyl-L-methionine = (E)-3-(methoxycarbonyl)pent-2-enedioate + S-adenosyl-L-homocysteine. Functionally, catalyzes the S-adenosylmethionine monomethyl esterification of trans-aconitate. The chain is Trans-aconitate 2-methyltransferase from Escherichia coli (strain UTI89 / UPEC).